The primary structure comprises 115 residues: UPF0122 protein lp_1634 (115 aa).

Belongs to the UPF0122 family.

Functionally, might take part in the signal recognition particle (SRP) pathway. This is inferred from the conservation of its genetic proximity to ftsY/ffh. May be a regulatory protein. The polypeptide is UPF0122 protein lp_1634 (Lactiplantibacillus plantarum (strain ATCC BAA-793 / NCIMB 8826 / WCFS1) (Lactobacillus plantarum)).